The sequence spans 317 residues: MTTALDQLKQYTTVVADTGDFQQLAQYKPQDATTNPSLILKAVQKDAYKPILEKTVRDHRNESTDFIIDRLLIAFGTEILKLIPGRVSTEVDARLSFDTQRSIDKGRELIKLYEAAGVGRERILIKLASTWEGIRAAEVLQKEGIKCNMTLLFSLVQAAACAEAGAQLISPFVGRIYDWYKKQAGADWNEARDGGANDPGVQSVRRIYTYYKTFGYKTEVMGASFRTTSQIIELAGCDLLTISPDLLQKLQESNDTVARKLSPDTLQDKPAERVAIDEASFRFQLNDEAMATEKLAEGIRVFAADAVKLEKLIDALR.

Lysine 126 functions as the Schiff-base intermediate with substrate in the catalytic mechanism.

Belongs to the transaldolase family. Type 1 subfamily. In terms of assembly, homodimer.

It is found in the cytoplasm. It carries out the reaction D-sedoheptulose 7-phosphate + D-glyceraldehyde 3-phosphate = D-erythrose 4-phosphate + beta-D-fructose 6-phosphate. It participates in carbohydrate degradation; pentose phosphate pathway; D-glyceraldehyde 3-phosphate and beta-D-fructose 6-phosphate from D-ribose 5-phosphate and D-xylulose 5-phosphate (non-oxidative stage): step 2/3. In terms of biological role, transaldolase is important for the balance of metabolites in the pentose-phosphate pathway. The protein is Transaldolase of Burkholderia cenocepacia (strain ATCC BAA-245 / DSM 16553 / LMG 16656 / NCTC 13227 / J2315 / CF5610) (Burkholderia cepacia (strain J2315)).